Here is a 276-residue protein sequence, read N- to C-terminus: Bifunctional protein FolD (276 aa).

Residues 157–159 (NRS), Ser-182, and Ile-223 each bind NADP(+).

It belongs to the tetrahydrofolate dehydrogenase/cyclohydrolase family. As to quaternary structure, homodimer.

The catalysed reaction is (6R)-5,10-methylene-5,6,7,8-tetrahydrofolate + NADP(+) = (6R)-5,10-methenyltetrahydrofolate + NADPH. It catalyses the reaction (6R)-5,10-methenyltetrahydrofolate + H2O = (6R)-10-formyltetrahydrofolate + H(+). The protein operates within one-carbon metabolism; tetrahydrofolate interconversion. Functionally, catalyzes the oxidation of 5,10-methylenetetrahydrofolate to 5,10-methenyltetrahydrofolate and then the hydrolysis of 5,10-methenyltetrahydrofolate to 10-formyltetrahydrofolate. The protein is Bifunctional protein FolD of Thermoplasma acidophilum (strain ATCC 25905 / DSM 1728 / JCM 9062 / NBRC 15155 / AMRC-C165).